Reading from the N-terminus, the 225-residue chain is Heptaprenylglyceryl phosphate synthase (225 aa).

Lysine 6 is a binding site for sn-glycerol 1-phosphate. Mg(2+) is bound by residues aspartate 8 and threonine 34. Sn-glycerol 1-phosphate is bound by residues 153 to 158, glycine 183, and 203 to 204; these read YVEYSG and GN.

It belongs to the GGGP/HepGP synthase family. Group I subfamily. As to quaternary structure, homodimer. Mg(2+) serves as cofactor.

The catalysed reaction is sn-glycerol 1-phosphate + all-trans-heptaprenyl diphosphate = 3-heptaprenyl-sn-glycero-1-phosphate + diphosphate. It participates in membrane lipid metabolism; glycerophospholipid metabolism. In terms of biological role, prenyltransferase that catalyzes in vivo the transfer of the heptaprenyl moiety of heptaprenyl pyrophosphate (HepPP; 35 carbon atoms) to the C3 hydroxyl of sn-glycerol-1-phosphate (G1P), producing heptaprenylglyceryl phosphate (HepGP). This reaction is an ether-bond-formation step in the biosynthesis of archaea-type G1P-based membrane lipids found in Bacillales. This is Heptaprenylglyceryl phosphate synthase from Listeria monocytogenes serotype 4b (strain F2365).